Here is a 53-residue protein sequence, read N- to C-terminus: Lantibiotic paenibacillin (53 aa).

The propeptide occupies 1 to 24 (MKVDQMFDLDLRKSYEASELSPQA). A24 carries the post-translational modification N-acetylalanine. 2,3-didehydroalanine (Ser) is present on S25. 2,3-didehydrobutyrine occurs at positions 29 and 30. The segment at residues 34–38 (SKAVC) is a cross-link (lanthionine (Ser-Cys)). 3 cross-links (beta-methyllanthionine (Thr-Cys)) span residues 40-43 (TLTC), 42-45 (TCIC), and 46-49 (TGSC). A cross-link (lanthionine (Ser-Cys)) is located at residues 48 to 52 (SCSNC). Position 50 is a 2,3-didehydroalanine (Ser) (S50).

Maturation of lantibiotics involves the enzymatic conversion of Thr, and Ser into dehydrated AA and the formation of thioether bonds with cysteine. This is followed by membrane translocation and cleavage of the modified precursor. In terms of processing, the structure of the 2,3-didehydrobutyrines is not discussed in PubMed:17071789.

The protein resides in the secreted. Lanthionine-containing peptide antibiotic (lantibiotic) active on Gram-positive bacteria. The bactericidal activity of lantibiotics is based on depolarization of energized bacterial cytoplasmic membranes, initiated by the formation of aqueous transmembrane pores. Lacks antibacterial activity against Gram-negative bacteria. The polypeptide is Lantibiotic paenibacillin (Paenibacillus polymyxa (Bacillus polymyxa)).